The following is a 190-amino-acid chain: Peptidyl-tRNA hydrolase (190 aa).

Residue Tyr-18 coordinates tRNA. The Proton acceptor role is filled by His-23. Residues Phe-69, Asn-71, and Asn-117 each contribute to the tRNA site.

Belongs to the PTH family. Monomer.

The protein localises to the cytoplasm. It carries out the reaction an N-acyl-L-alpha-aminoacyl-tRNA + H2O = an N-acyl-L-amino acid + a tRNA + H(+). Hydrolyzes ribosome-free peptidyl-tRNAs (with 1 or more amino acids incorporated), which drop off the ribosome during protein synthesis, or as a result of ribosome stalling. Its function is as follows. Catalyzes the release of premature peptidyl moieties from peptidyl-tRNA molecules trapped in stalled 50S ribosomal subunits, and thus maintains levels of free tRNAs and 50S ribosomes. The polypeptide is Peptidyl-tRNA hydrolase (Rhodococcus opacus (strain B4)).